A 348-amino-acid polypeptide reads, in one-letter code: Actin maturation protease (348 aa).

The segment covering 1 to 18 (MISPCSPPLEPPVPPPET) has biased composition (pro residues). Residues 1-64 (MISPCSPPLE…LPPPPRTTGF (64 aa)) are disordered. Positions 34–48 (NLPELAFPPSSFQAS) are enriched in low complexity. Positions 49–60 (VPPPPPLPPPPR) are enriched in pro residues. A peptidase C39-like region spans residues 121 to 241 (SLIQEGPQCG…WAVSAGVLLG (121 aa)). Residue cysteine 129 is part of the active site. A Phosphoserine modification is found at serine 313.

Belongs to the ACTMAP family. As to quaternary structure, interacts (via N-terminus) with PFN2; the interaction may facilitate efficient cleavage of the acetylated N-terminus of immature actin. Interacts with PFN1.

It localises to the cytoplasm. It catalyses the reaction N-terminal N(alpha)-acetyl-L-methionyl-L-aspartyl-[protein] + H2O = N-terminal L-aspartyl-[protein] + N-acetyl-L-methionine. The catalysed reaction is N-terminal N(alpha)-acetyl-L-methionyl-L-glutamyl-[protein] + H2O = N-terminal L-glutamyl-[protein] + N-acetyl-L-methionine. The enzyme catalyses N-terminal N(alpha)-acetyl-L-cysteinyl-L-aspartyl-[protein] + H2O = N-terminal L-aspartyl-[protein] + N-acetyl-L-cysteine. It carries out the reaction N-terminal N(alpha)-acetyl-L-cysteinyl-L-glutamyl-[protein] + H2O = N-terminal L-glutamyl-[protein] + N-acetyl-L-cysteine. In terms of biological role, actin maturation protease that specifically mediates the cleavage of immature acetylated N-terminal actin, thereby contributing to actin maturation. Cleaves N-terminal acetylated methionine of immature cytoplasmic beta- and gamma-actins ACTB and ACTG1 after translation. Cleaves N-terminal acetylated cysteine of muscle alpha-actins ACTA1, ACTC1 and ACTA2 after canonical removal of N-terminal methionine. This Bos taurus (Bovine) protein is Actin maturation protease.